The sequence spans 555 residues: Glutamate--tRNA ligase (555 aa).

The 'HIGH' region motif lies at 100-110; that stretch reads PNPSGPLHIGH.

It belongs to the class-I aminoacyl-tRNA synthetase family. Glutamate--tRNA ligase type 2 subfamily.

Its subcellular location is the cytoplasm. The enzyme catalyses tRNA(Glu) + L-glutamate + ATP = L-glutamyl-tRNA(Glu) + AMP + diphosphate. Catalyzes the attachment of glutamate to tRNA(Glu) in a two-step reaction: glutamate is first activated by ATP to form Glu-AMP and then transferred to the acceptor end of tRNA(Glu). The polypeptide is Glutamate--tRNA ligase (Methanococcus maripaludis (strain C7 / ATCC BAA-1331)).